A 555-amino-acid chain; its full sequence is Formate--tetrahydrofolate ligase (555 aa).

65 to 72 provides a ligand contact to ATP; the sequence is TPAGEGKS.

The protein belongs to the formate--tetrahydrofolate ligase family.

It catalyses the reaction (6S)-5,6,7,8-tetrahydrofolate + formate + ATP = (6R)-10-formyltetrahydrofolate + ADP + phosphate. The protein operates within one-carbon metabolism; tetrahydrofolate interconversion. This chain is Formate--tetrahydrofolate ligase, found in Staphylococcus aureus (strain USA300).